The sequence spans 532 residues: Di/tripeptide-binding protein 2 (532 aa).

The N-terminal stretch at 1-24 (MRPRSALRYSLLLLAFAASAAIQA) is a signal peptide.

Belongs to the bacterial solute-binding protein 5 family. As to quaternary structure, the complex is composed of two ATP-binding proteins (DppD and DppF), two transmembrane proteins (DppB and DppC) and a solute-binding protein (DppA2). Five orthologous SBPs (DppA1-A5) are present in P.aeruginosa, which increases the substrate specificity of the DppBCDF transporter.

Its function is as follows. Part of the ABC transporter DppABCDF involved in the uptake of various di/tripeptides. Shows high flexibility on substrate recognition. Efficiently uses tripeptides. This chain is Di/tripeptide-binding protein 2, found in Pseudomonas aeruginosa (strain UCBPP-PA14).